Reading from the N-terminus, the 377-residue chain is tRNA-specific 2-thiouridylase MnmA (377 aa).

Residues 22-29 and methionine 48 each bind ATP; that span reads GMSGGVDS. The interval 108 to 110 is interaction with target base in tRNA; it reads NPD. Cysteine 113 serves as the catalytic Nucleophile. A disulfide bond links cysteine 113 and cysteine 210. Position 138 (glycine 138) interacts with ATP. Positions 160–162 are interaction with tRNA; it reads KDQ. The Cysteine persulfide intermediate role is filled by cysteine 210. The interaction with tRNA stretch occupies residues 322 to 323; the sequence is RY.

This sequence belongs to the MnmA/TRMU family.

It localises to the cytoplasm. The enzyme catalyses S-sulfanyl-L-cysteinyl-[protein] + uridine(34) in tRNA + AH2 + ATP = 2-thiouridine(34) in tRNA + L-cysteinyl-[protein] + A + AMP + diphosphate + H(+). Its function is as follows. Catalyzes the 2-thiolation of uridine at the wobble position (U34) of tRNA, leading to the formation of s(2)U34. The chain is tRNA-specific 2-thiouridylase MnmA from Shewanella amazonensis (strain ATCC BAA-1098 / SB2B).